A 173-amino-acid polypeptide reads, in one-letter code: Crossover junction endodeoxyribonuclease RuvC (173 aa).

Residues Asp8, Glu67, and Asp139 contribute to the active site. Mg(2+) contacts are provided by Asp8, Glu67, and Asp139.

Belongs to the RuvC family. In terms of assembly, homodimer which binds Holliday junction (HJ) DNA. The HJ becomes 2-fold symmetrical on binding to RuvC with unstacked arms; it has a different conformation from HJ DNA in complex with RuvA. In the full resolvosome a probable DNA-RuvA(4)-RuvB(12)-RuvC(2) complex forms which resolves the HJ. The cofactor is Mg(2+).

It is found in the cytoplasm. The enzyme catalyses Endonucleolytic cleavage at a junction such as a reciprocal single-stranded crossover between two homologous DNA duplexes (Holliday junction).. Its function is as follows. The RuvA-RuvB-RuvC complex processes Holliday junction (HJ) DNA during genetic recombination and DNA repair. Endonuclease that resolves HJ intermediates. Cleaves cruciform DNA by making single-stranded nicks across the HJ at symmetrical positions within the homologous arms, yielding a 5'-phosphate and a 3'-hydroxyl group; requires a central core of homology in the junction. The consensus cleavage sequence is 5'-(A/T)TT(C/G)-3'. Cleavage occurs on the 3'-side of the TT dinucleotide at the point of strand exchange. HJ branch migration catalyzed by RuvA-RuvB allows RuvC to scan DNA until it finds its consensus sequence, where it cleaves and resolves the cruciform DNA. The polypeptide is Crossover junction endodeoxyribonuclease RuvC (Aeromonas hydrophila subsp. hydrophila (strain ATCC 7966 / DSM 30187 / BCRC 13018 / CCUG 14551 / JCM 1027 / KCTC 2358 / NCIMB 9240 / NCTC 8049)).